Consider the following 585-residue polypeptide: Probable phosphoglucomutase, cytoplasmic 2 (585 aa).

Residues 1-20 (MVSFKVSLVSTSPIDGQKPG) are disordered. Positions 25 and 124 each coordinate alpha-D-glucose 1,6-bisphosphate. Ser-124 serves as the catalytic Phosphoserine intermediate. Ser-124, Asp-301, Asp-303, and Asp-305 together coordinate Mg(2+). Ser-124 is subject to Phosphoserine. Alpha-D-glucose 1,6-bisphosphate contacts are provided by Asp-305, Arg-306, Thr-369, Glu-388, Ser-390, and Lys-401.

The protein belongs to the phosphohexose mutase family. Monomer. Mg(2+) serves as cofactor.

The protein localises to the cytoplasm. It carries out the reaction alpha-D-glucose 1-phosphate = alpha-D-glucose 6-phosphate. The enzyme catalyses O-phospho-L-seryl-[protein] + alpha-D-glucose 1-phosphate = alpha-D-glucose 1,6-bisphosphate + L-seryl-[protein]. The catalysed reaction is alpha-D-glucose 1,6-bisphosphate + L-seryl-[protein] = O-phospho-L-seryl-[protein] + alpha-D-glucose 6-phosphate. In terms of biological role, catalyzes the reversible isomerization of alpha-D-glucose 1-phosphate to alpha-D-glucose 6-phosphate. The mechanism proceeds via the intermediate compound alpha-D-glucose 1,6-bisphosphate. This enzyme participates in both the breakdown and synthesis of glucose. This Arabidopsis thaliana (Mouse-ear cress) protein is Probable phosphoglucomutase, cytoplasmic 2.